A 119-amino-acid polypeptide reads, in one-letter code: Acidic phospholipase A2 DE-III (119 aa).

Cystine bridges form between Cys11–Cys72, Cys26–Cys118, Cys28–Cys44, Cys43–Cys99, Cys50–Cys92, Cys60–Cys85, and Cys79–Cys90. Ca(2+) contacts are provided by Tyr27, Gly29, and Gly31. His47 is an active-site residue. Asp48 contacts Ca(2+). Asp93 is an active-site residue.

It belongs to the phospholipase A2 family. Group I subfamily. D49 sub-subfamily. The cofactor is Ca(2+). In terms of tissue distribution, expressed by the venom gland.

The protein resides in the secreted. It catalyses the reaction a 1,2-diacyl-sn-glycero-3-phosphocholine + H2O = a 1-acyl-sn-glycero-3-phosphocholine + a fatty acid + H(+). In terms of biological role, PLA2 catalyzes the calcium-dependent hydrolysis of the 2-acyl groups in 3-sn-phosphoglycerides. The polypeptide is Acidic phospholipase A2 DE-III (Naja melanoleuca (Forest cobra)).